The chain runs to 249 residues: 3-deoxy-D-manno-octulosonic acid kinase (249 aa).

Asp-175 is a catalytic residue.

It belongs to the protein kinase superfamily. KdkA/RfaP family.

It is found in the cell inner membrane. It catalyses the reaction an alpha-Kdo-(2-&gt;6)-lipid IVA + ATP = a 4-O-phospho-alpha-Kdo-(2-&gt;6)-lipid IVA + ADP + H(+). Its pathway is bacterial outer membrane biogenesis; LPS core biosynthesis. Functionally, catalyzes the ATP-dependent phosphorylation of the 3-deoxy-D-manno-octulosonic acid (Kdo) residue in Kdo-lipid IV(A) at the 4-OH position. The protein is 3-deoxy-D-manno-octulosonic acid kinase of Xanthomonas axonopodis pv. citri (strain 306).